The primary structure comprises 688 residues: Phosphoinositide 3-phosphatase (688 aa).

Residues 155 to 637 (SWDIYDPIKE…KKVQWWWQLY (483 aa)) enclose the Myotubularin phosphatase domain. Residue C397 is the Phosphocysteine intermediate of the active site. A compositionally biased stretch (basic and acidic residues) spans 647-668 (ELRHKRDSVPISVDKKSKEHSN). The interval 647-672 (ELRHKRDSVPISVDKKSKEHSNSDGG) is disordered.

Belongs to the protein-tyrosine phosphatase family. Non-receptor class myotubularin subfamily.

It localises to the cytoplasm. The catalysed reaction is a 1,2-diacyl-sn-glycero-3-phospho-(1D-myo-inositol-3-phosphate) + H2O = a 1,2-diacyl-sn-glycero-3-phospho-(1D-myo-inositol) + phosphate. Its function is as follows. Lipid phosphatase which dephosphorylates phosphatidylinositol 3-monophosphate (PI3P). Involved in the control of PI3P-dependent signaling and in the maintenance of endosomal system integrity. The protein is Phosphoinositide 3-phosphatase of Saccharomyces cerevisiae (strain ATCC 204508 / S288c) (Baker's yeast).